The primary structure comprises 3242 residues: tRNA nuclease CdiA (3242 aa).

Residues 1–32 (MHQPPVRFTYRLLSYLISTIIAGQPLLPAVGA) form the signal peptide. The interval 36-322 (PQNGAGMDKA…AGGNLSVTGT (287 aa)) is two-partner system transport domain (TPS). The FHA-1 stretch occupies residues 351 to 1376 (GELTAGQNAM…IVVRTGHLLN (1026 aa)). A receptor-binding domain (RBD) region spans residues 1377–1668 (QREGFSATTT…TGQTGISDDW (292 aa)). The tract at residues 1668–1852 (WPLPSGNNGY…LSPEDITLHN (185 aa)) is YP domain. The segment at 1853 to 1913 (GSVISGNNVQ…DLSAIGDISN (61 aa)) is periplasmic FHA-1 repeat (pFR). The tract at residues 2021-2631 (DNSASSTTSQ…TSKYDSKQTS (611 aa)) is FHA-2. Residues 2075-2091 (RESKNSRNGRSESHESH) are compositionally biased toward basic and acidic residues. 3 disordered regions span residues 2075-2094 (RESK…HAAV), 2310-2333 (GSSK…STIG), and 2439-2481 (TMAS…NAGN). The segment covering 2322-2333 (GTTQSQSASTIG) has biased composition (polar residues). A DUF638-CT domain; not toxic when added to the outside of E.coli, does not interfere with F-pilus mediated conjugation, toxic when expressed intracellularly region spans residues 2969 to 3242 (GVDPSKLTED…IESALKGYGI (274 aa)). The pre-toxin (PT) domain stretch occupies residues 2972–3015 (PSKLTEDQKQTVSTLATLSAGMAGGIASGDVAGAAAGAGAGKNV). Positions 3016–3019 (VENN) match the VENN CT cleavage motif motif. Residues 3016–3097 (VENNALSLVA…KYLSSLHDKY (82 aa)) are toxin import domain; sufficient to import the tRNA nuclease domain of colicin E5 into E.coli, may bind F-pili. The CT domain; toxic when added to the outside of E.coli and when expressed intracellularly stretch occupies residues 3016 to 3242 (VENNALSLVA…IESALKGYGI (227 aa)). Residues 3020 to 3141 (ALSLVARGCA…SENDPKQQNE (122 aa)) form an inner membrane translocation domain (IMTD), targets protein to FtsH region. Residues 3020–3242 (ALSLVARGCA…IESALKGYGI (223 aa)) form a C-terminal effector domain (CT) region. The tRNase function, does not interfere with F-pilus mediated conjugation stretch occupies residues 3098–3242 (GSGAASNPNI…IESALKGYGI (145 aa)). Residues 3116–3146 (KVELGGSGSGTGTPPPSENDPKQQNEKTVDK) form a disordered region. The span at 3134–3146 (NDPKQQNEKTVDK) shows a compositional bias: basic and acidic residues. Positions 3137 to 3238 (KQQNEKTVDK…AINKIESALK (102 aa)) form a coiled coil. Catalysis depends on residues D3170, H3193, and E3196.

The protein in the N-terminal section; belongs to the CdiA toxin family. In terms of assembly, the C-terminal (CT) domain interacts with cognate CdiI but not non-cognate CdiI from D.dadantii strain 3937. CdiA-CT also interacts with CysK; this is blocked upon preincubation with O-acetyl-L-serine. CysK forms a complex with CdiA-CT/CdiI. One CdiA toxin subunit binds to each subunit of the CysK homodimer, and one CdiI immunity protein binds to each toxin subunit; the immune complex is thus a dimer of trimers. The 4 C-terminal residues of CdiA fit into the active site of CysK. The cofactor is a divalent metal cation.

It localises to the secreted. The protein resides in the target cell membrane. It is found in the target cell. Its subcellular location is the target cell cytoplasm. Functionally, toxic component of a toxin-immunity protein module, which functions as a cellular contact-dependent growth inhibition (CDI) system. CDI modules allow bacteria to communicate with and inhibit the growth of closely related neighboring bacteria in a contact-dependent fashion (target cell counts decrease 100- to 1000-fold). CdiA toxicity is neutralized by its cognate immunity protein CdiI, but not by CdiI from other bacteria. Uses heterotrimeric OmpC and OmpF as target cell outer membrane receptors; receptor function depends on polymorphisms in extracellular loops L4 and L5 of OmpC; interacts with itself and closely related bacteria but also with OmpC from E.cloacae ATCC 13047. Its ability to preferentially bind to 'self' receptors suggests it may also play a role in self-recognition and kin selection. A bamA mutation that decreases its expression about 5-fold is partially resistant to this strain of CdiA, probably due to decreased outer membrane receptor protein assembly. Isolated CdiA-CT is imported in an F-pilus-mediated fashion; CdiA-CT inhibits F-mediated conjugation, probably via its N-terminus (residues 3016-3097), although it is not clear if this is physiologically significant. Gains access to the cytoplasm of target cells by using integral inner membrane protein FtsH. The C-terminal domain (CT) cleaves within tRNA anticodon loops; this activity is inhibited by cognate CdiI. tRNase activity of CdiA-CT is stimulated by CysK, although the extreme C-terminus (residues 3098-3242) has tRNase activity in the absence of CysK. In vivo CDI toxicity requires CysK. CysK stabilizes CdiA-CT, allowing it to bind tRNA substrate; neither CdiA-CT nor CysK bind tRNA alone in vitro. Purified CdiA-CT (residues 3016-3242) inhibits E.coli cell growth when added to cultures alone or in complex with cognate CdiI, growth is inhibited when cognate CdiI is present within the cell but not when a CdiA-CT/CdiI complex is added extracellularly, suggesting CdiA-CT alone but not the CdiA-CT/CdiI complex is imported into the target cell. The CdiA protein is thought to be exported from the cell through the central lumen of CdiB, the other half of its two-partner system (TPS). The TPS domain probably remains associated with CdiB while the FHA-1 domain forms an extended filament with the receptor-binding domain (RBD) at its extremity; in the secretion arrested state the C-terminus of the RBD and YP domains form a hairpin-like structure as the FHA-2, PT and CT domains are periplasmic. The YP domain is probably responsible for this arrest at the point where it re-enters the host cell periplasm. Upon binding to a target cell outer membrane receptor (heterotrimeric OmpC-OmpF for this CDI) a signal is transmitted to activate secretion. The filament elongates slightly, the rest of CdiA is secreted and the FHA-2 domain becomes stably associated with the target cell's outer membrane where it facilitates entry of the toxic CT domain into the target cell periplasm. From there the toxic CT domain is cleaved and gains access to the target cell cytoplasm via an inner membrane protein (FtsH for this CDI). This chain is tRNA nuclease CdiA, found in Escherichia coli O6:K15:H31 (strain 536 / UPEC).